A 134-amino-acid chain; its full sequence is MAETTEFELVSPERLLFSEPVEMVVVPGTDGDFGAMPRHAPLLSTVRPGVISTYNGGKVQRRIFVAGGFAEVTEDRCTVLADEAFDLASLSEEAVRARLQAADDRLKEATSEAEKAEAAQAKAIAEALLAARKG.

Belongs to the ATPase epsilon chain family. F-type ATPases have 2 components, CF(1) - the catalytic core - and CF(0) - the membrane proton channel. CF(1) has five subunits: alpha(3), beta(3), gamma(1), delta(1), epsilon(1). CF(0) has three main subunits: a, b and c.

The protein resides in the cell inner membrane. Produces ATP from ADP in the presence of a proton gradient across the membrane. The protein is ATP synthase epsilon chain of Rhodospirillum rubrum (strain ATCC 11170 / ATH 1.1.1 / DSM 467 / LMG 4362 / NCIMB 8255 / S1).